The chain runs to 296 residues: MPLVRVPATTANLGPGFDTLGMALNLFDELKIEESSSPEIIITGEGEGTIPRGQENIAYRAARAVFAKVGRPPVPLKLEMHNSIPVARGLGSSAAALVGAIVGTNAILGGPLGPAELVNLATTLEGHPDNVAPAILGGLVASARDGEQVICRRLELPPGLVTVVAIPQFTLSTRISRGVLPAKVDLEDAVFNISRVAVLLAAVATGDLDLMGRMMVDKLHQPYRLPLIPGMAEVFAAAREAGALAVTLSGSGPTVIAFCRGRQPKVGPAMAAAFARKGVKCTVKELAPCNHGAVVI.

Residue 85-95 (PVARGLGSSAA) participates in ATP binding.

The protein belongs to the GHMP kinase family. Homoserine kinase subfamily.

Its subcellular location is the cytoplasm. The catalysed reaction is L-homoserine + ATP = O-phospho-L-homoserine + ADP + H(+). It participates in amino-acid biosynthesis; L-threonine biosynthesis; L-threonine from L-aspartate: step 4/5. Its function is as follows. Catalyzes the ATP-dependent phosphorylation of L-homoserine to L-homoserine phosphate. In Moorella thermoacetica (strain ATCC 39073 / JCM 9320), this protein is Homoserine kinase.